A 284-amino-acid chain; its full sequence is Mediator of RNA polymerase II transcription subunit 4 (284 aa).

At Ser-2 the chain carries N-acetylserine. The interval 205 to 284 (RIPGEEVEET…DLDLFDPDDF (80 aa)) is disordered. The span at 225 to 238 (EEQKGQMAKKEGTP) shows a compositional bias: basic and acidic residues. Residue Thr-237 is modified to Phosphothreonine; by KIN28. Ser-242 is modified (phosphoserine). A compositionally biased stretch (basic and acidic residues) spans 248 to 265 (TAKEVGDEADNTKDKEKE). The span at 266 to 284 (ENNDDALDLDLDLFDPDDF) shows a compositional bias: acidic residues.

It belongs to the Mediator complex subunit 4 family. In terms of assembly, component of the Mediator complex, which is composed of at least 21 subunits that form three structurally distinct submodules. The Mediator head module contains MED6, MED8, MED11, SRB4/MED17, SRB5/MED18, ROX3/MED19, SRB2/MED20 and SRB6/MED22, the middle module contains MED1, MED4, NUT1/MED5, MED7, CSE2/MED9, NUT2/MED10, SRB7/MED21 and SOH1/MED31, and the tail module contains MED2, PGD1/MED3, RGR1/MED14, GAL11/MED15 and SIN4/MED16. The head and the middle modules interact directly with RNA polymerase II, whereas the elongated tail module interacts with gene-specific regulatory proteins. MED4 interacts directly with MED1, MED7 and SRB7/MED21.

It is found in the nucleus. Functionally, component of the Mediator complex, a coactivator involved in the regulated transcription of nearly all RNA polymerase II-dependent genes. Mediator functions as a bridge to convey information from gene-specific regulatory proteins to the basal RNA polymerase II transcription machinery. The Mediator complex, having a compact conformation in its free form, is recruited to promoters by direct interactions with regulatory proteins and serves for the assembly of a functional preinitiation complex with RNA polymerase II and the general transcription factors. The Mediator complex unfolds to an extended conformation and partially surrounds RNA polymerase II, specifically interacting with the unphosphorylated form of the C-terminal domain (CTD) of RNA polymerase II. The Mediator complex dissociates from the RNA polymerase II holoenzyme and stays at the promoter when transcriptional elongation begins. This Saccharomyces cerevisiae (strain ATCC 204508 / S288c) (Baker's yeast) protein is Mediator of RNA polymerase II transcription subunit 4 (MED4).